A 239-amino-acid polypeptide reads, in one-letter code: Fatty acid metabolism regulator protein (239 aa).

In terms of domain architecture, HTH gntR-type spans 6–74 (QSPAGFAEEY…HGKPTKINNF (69 aa)). Positions 34-53 (ERELSELIGVTRTTLREVLQ) form a DNA-binding region, H-T-H motif.

As to quaternary structure, homodimer.

The protein localises to the cytoplasm. Functionally, multifunctional regulator of fatty acid metabolism. The chain is Fatty acid metabolism regulator protein from Pectobacterium carotovorum subsp. carotovorum (strain PC1).